Consider the following 622-residue polypeptide: V-type ATP synthase subunit I 1 (622 aa).

The next 8 helical transmembrane spans lie at Trp-306–Val-326, Ile-328–Gly-348, Pro-373–Cys-393, Gln-428–Val-448, Ala-459–Val-479, Pro-485–Val-505, Val-532–Ile-552, and Pro-562–Leu-582.

The protein belongs to the V-ATPase 116 kDa subunit family.

It localises to the cell membrane. In terms of biological role, produces ATP from ADP in the presence of a proton gradient across the membrane. The protein is V-type ATP synthase subunit I 1 (atpI1) of Treponema pallidum (strain Nichols).